The chain runs to 2344 residues: Pecanex-like protein 1 (2344 aa).

The next 2 helical transmembrane spans lie at 33–53 (ALHL…YMAL) and 57–77 (MIIV…LKMV). Disordered stretches follow at residues 101–163 (QRAK…GSSR), 271–290 (SHSY…SSSA), 306–692 (QQQR…TRAR), and 749–837 (VTRS…VQSR). A compositionally biased stretch (polar residues) spans 143 to 163 (SSRNSYAGLDPSNQIGSGSSR). Residues 272–282 (HSYRKEHRPRG) show a composition bias toward basic residues. The span at 328–343 (RESSAGKSCPPAQSQP) shows a compositional bias: polar residues. A compositionally biased stretch (low complexity) spans 372–390 (SLRSLSTRSSGSTESYCSG). Residues 396–406 (NSTLSSYKSEQ) are compositionally biased toward polar residues. Composition is skewed to basic and acidic residues over residues 416–458 (LSEH…DKTA), 508–522 (RPPE…EQSE), and 531–547 (RVCK…DVRP). The span at 557 to 572 (TSAHKPGRRRTGKKRA) shows a compositional bias: basic residues. Residues 616-638 (SIHSAHQFSSDSSSSATSHSCQS) are compositionally biased toward low complexity. Over residues 749-758 (VTRSRNSLPS) the composition is skewed to polar residues. Low complexity-rich tracts occupy residues 770–781 (AATGAAQASEEA) and 817–835 (LSLQ…VKVQ). The next 3 helical transmembrane spans lie at 1010–1030 (ILAV…LIQG), 1035–1055 (IWVF…LKSV), and 1069–1089 (IIAY…WLLD). Residue Asn1094 is glycosylated (N-linked (GlcNAc...) asparagine). The helical transmembrane segment at 1119 to 1139 (LVIVFTLCFPIVFFIGLLPQV) threads the bilayer. Residue Asn1158 is glycosylated (N-linked (GlcNAc...) asparagine). The next 4 helical transmembrane spans lie at 1163–1183 (LLAA…LYGL), 1196–1216 (HVPV…YHLS), 1269–1289 (LVVC…TVFT), and 1297–1317 (YVLY…LPQV). N-linked (GlcNAc...) asparagine glycans are attached at residues Asn1582, Asn1723, Asn1985, and Asn2075. Residues 2051-2123 (EDSDTGGGTS…SSLVRQSPAR (73 aa)) are disordered. Polar residues-rich tracts occupy residues 2061-2081 (CPGN…QGST) and 2095-2118 (PTTS…SLVR). 3 N-linked (GlcNAc...) asparagine glycosylation sites follow: Asn2231, Asn2237, and Asn2263.

The protein belongs to the pecanex family.

Its subcellular location is the membrane. This Mus musculus (Mouse) protein is Pecanex-like protein 1.